The chain runs to 379 residues: Cytochrome b (379 aa).

4 helical membrane passes run phenylalanine 33 to methionine 53, tryptophan 77 to isoleucine 98, tryptophan 113 to leucine 133, and phenylalanine 178 to leucine 198. Residues histidine 83 and histidine 97 each contribute to the heme b site. Histidine 182 and histidine 196 together coordinate heme b. Histidine 201 is an a ubiquinone binding site. Transmembrane regions (helical) follow at residues isoleucine 226–serine 246, leucine 288–histidine 308, leucine 320–glycine 340, and phenylalanine 347–proline 367.

Belongs to the cytochrome b family. In terms of assembly, the cytochrome bc1 complex contains 11 subunits: 3 respiratory subunits (MT-CYB, CYC1 and UQCRFS1), 2 core proteins (UQCRC1 and UQCRC2) and 6 low-molecular weight proteins (UQCRH/QCR6, UQCRB/QCR7, UQCRQ/QCR8, UQCR10/QCR9, UQCR11/QCR10 and a cleavage product of UQCRFS1). This cytochrome bc1 complex then forms a dimer. It depends on heme b as a cofactor.

It is found in the mitochondrion inner membrane. In terms of biological role, component of the ubiquinol-cytochrome c reductase complex (complex III or cytochrome b-c1 complex) that is part of the mitochondrial respiratory chain. The b-c1 complex mediates electron transfer from ubiquinol to cytochrome c. Contributes to the generation of a proton gradient across the mitochondrial membrane that is then used for ATP synthesis. In Ctenomys leucodon (White-toothed tuco-tuco), this protein is Cytochrome b (MT-CYB).